We begin with the raw amino-acid sequence, 151 residues long: D-aminoacyl-tRNA deacylase (151 aa).

The Gly-cisPro motif, important for rejection of L-amino acids motif lies at 142–143 (GP).

This sequence belongs to the DTD family. In terms of assembly, homodimer.

The protein localises to the cytoplasm. The enzyme catalyses glycyl-tRNA(Ala) + H2O = tRNA(Ala) + glycine + H(+). It carries out the reaction a D-aminoacyl-tRNA + H2O = a tRNA + a D-alpha-amino acid + H(+). Functionally, an aminoacyl-tRNA editing enzyme that deacylates mischarged D-aminoacyl-tRNAs. Also deacylates mischarged glycyl-tRNA(Ala), protecting cells against glycine mischarging by AlaRS. Acts via tRNA-based rather than protein-based catalysis; rejects L-amino acids rather than detecting D-amino acids in the active site. By recycling D-aminoacyl-tRNA to D-amino acids and free tRNA molecules, this enzyme counteracts the toxicity associated with the formation of D-aminoacyl-tRNA entities in vivo and helps enforce protein L-homochirality. In Psychrobacter arcticus (strain DSM 17307 / VKM B-2377 / 273-4), this protein is D-aminoacyl-tRNA deacylase.